A 4036-amino-acid chain; its full sequence is Hybrid PKS-NRPS synthetase iliA (4036 aa).

Residues 7–439 form the Ketosynthase family 3 (KS3) domain; that stretch reads PEPIAVIGSA…GTNAHAIIES (433 aa). Active-site for beta-ketoacyl synthase activity residues include cysteine 181, histidine 318, and histidine 359. The interval 561 to 886 is malonyl-CoA:ACP transacylase (MAT) domain; the sequence is IFTGQGAQWP…LKRNGSDVEA (326 aa). Residues 955–1092 are N-terminal hotdog fold; the sequence is HELLGRRTPD…GDLVVHLGAD (138 aa). Residues 955-1262 are dehydratase (DH) domain; sequence HELLGRRTPD…ATNMVGEQDA (308 aa). The region spanning 955–1263 is the PKS/mFAS DH domain; sequence HELLGRRTPD…TNMVGEQDAS (309 aa). Histidine 987 acts as the Proton acceptor; for dehydratase activity in catalysis. Positions 1109–1263 are C-terminal hotdog fold; that stretch reads LVNIDGERVY…TNMVGEQDAS (155 aa). The active-site Proton donor; for dehydratase activity is aspartate 1168. The tract at residues 1402 to 1601 is methyltransferase (MT) domain; that stretch reads EDDMLDRFYM…FSGADTVMHD (200 aa). The segment at 2136-2277 is ketoreductase (KR) domain; sequence KTYFMVGMAG…SVATVIGNIG (142 aa). The Carrier 1 domain maps to 2425–2502; it reads EAVAAVVKAF…QVCTWATKKV (78 aa). An O-(pantetheine 4'-phosphoryl)serine modification is found at serine 2462. Disordered stretches follow at residues 2520–2583 and 2597–2621; these read AEKT…KLGT and DADA…NRPE. The span at 2530 to 2540 shows a compositional bias: pro residues; that stretch reads APAPDAAPAPA. Positions 2627-3054 are condensation (C) domain; the sequence is IMSQAQSRIW…HLDITECEIY (428 aa). The segment at 3088–3485 is adenylation (A) (KR) domain; sequence SLHSDKSAVK…GTLLCLGRLD (398 aa). The reductase (RED) domain stretch occupies residues 3088-3485; that stretch reads SLHSDKSAVK…GTLLCLGRLD (398 aa). Residues 3596–3675 enclose the Carrier 2 domain; the sequence is EKMTIREGEV…EMARRIDEHQ (80 aa). The residue at position 3635 (serine 3635) is an O-(pantetheine 4'-phosphoryl)serine.

It in the C-terminal section; belongs to the NRP synthetase family.

It carries out the reaction L-tyrosine + holo-[ACP] + 7 malonyl-CoA + acetyl-CoA + 8 AH2 + 2 S-adenosyl-L-methionine + ATP + 4 H(+) = N-[(4E,6E,10S,12Z,14E)-6,10-dimethyl-3-oxohexadeca-4,6,12,14-tetraenoyl]-L-tyrosyl-[ACP] + 8 A + AMP + 2 S-adenosyl-L-homocysteine + 7 CO2 + diphosphate + 8 CoA + 6 H2O. Its pathway is mycotoxin biosynthesis. Its function is as follows. Hybrid PKS-NRPS synthetase; part of the gene cluster that mediates the biosynthesis of ilicicolin H, a 4-hydroxy-2-pyridonealkaloid that has potent and broad antifungal activities by inhibiting the mitochondrial respiration chain. IliA assembles the backbone of ilicicolin H. The PKS portion and trans-acting enoyl reductase iliB work together to construct an octaketide, and two methyl groups are introduced by the MT domain during the chain assembly. The nascent chain is then condensed with tyrosine, catalyzed by the C domain, and the resulting PKS-NRPS hybrid is offloaded by the RED domain to form an advanced tetramic acid intermediate. The biosynthesis of ilicicolin H starts with formation of the tetramic acid by the hybrid PKS-NRPS synthetase iliA with the partnering trans-enoyl reductase iliB since iliA lacks a designated enoylreductase (ER) domain. The cytochrome P450 monooxygenase iliC then catalyzes the ring expansion of the tetramate to the acyclic 2-pyridone. The pericyclase iliD further converts the acyclic 2-pyridone into 8-epi-ilicicolin H. 8-epi-ilicicolin H might then spontaneously convert to ilicicolin H, since ilicicolin H is produced in the absence of the epimerase iliE, in contrast to what was observed for the Talaromyces variabilis ilicolin H biosynthetic pathway. The sequence is that of Hybrid PKS-NRPS synthetase iliA from Neonectria sp. (strain DH2).